We begin with the raw amino-acid sequence, 1941 residues long: Myosin-2 (1941 aa).

The 50-residue stretch at 33–82 (DAKTSVFVAEPKESFVKGTIQSREGGKVTVKTEGGATLTVKDDQVFPMNP) folds into the Myosin N-terminal SH3-like domain. Residues T64 and T69 each carry the phosphothreonine modification. Positions 86–784 (DKIEDMAMMT…LLGLLEEMRD (699 aa)) constitute a Myosin motor domain. K130 bears the N6,N6,N6-trimethyllysine mark. Residue 179 to 186 (GESGAGKT) participates in ATP binding. A Phosphotyrosine modification is found at Y389. S392 is modified (phosphoserine). T419 is subject to Phosphothreonine. A Phosphoserine modification is found at S625. The tract at residues 661 to 683 (LNKLMTNLRSTHPHFVRCIIPNE) is actin-binding. The residue at position 759 (H759) is a Pros-methylhistidine. Residues 763–777 (KFGHTKVFFKAGLLG) are actin-binding. The IQ domain occupies 787 to 816 (LAQLITRTQARCRGFLARVEYQRMVERREA). Residues 845–1941 (LLKSAETEKE…EVHTKVISEE (1097 aa)) adopt a coiled-coil conformation. S1094 and S1098 each carry phosphoserine. 2 disordered regions span residues 1128 to 1149 (IEAE…SREL) and 1155 to 1174 (RLEE…KKRE). The segment covering 1130–1149 (AERASRAKAEKQRSDLSREL) has biased composition (basic and acidic residues). A phosphoserine mark is found at S1164 and S1239. The residue at position 1243 (T1243) is a Phosphothreonine. S1245 is subject to Phosphoserine. T1257 is subject to Phosphothreonine. A Phosphoserine modification is found at S1263. T1288 is modified (phosphothreonine). Phosphoserine is present on residues S1290, S1294, S1305, and S1308. At T1469 the chain carries Phosphothreonine. A Phosphoserine modification is found at S1476. Y1494 is modified (phosphotyrosine). S1497 carries the phosphoserine modification. T1503 carries the phosphothreonine modification. A Phosphoserine modification is found at S1516. At T1519 the chain carries Phosphothreonine. Phosphoserine is present on residues S1556, S1576, S1602, S1605, S1716, and S1728. T1732 and T1738 each carry phosphothreonine. S1741 carries the post-translational modification Phosphoserine.

Belongs to the TRAFAC class myosin-kinesin ATPase superfamily. Myosin family. As to quaternary structure, muscle myosin is a hexameric protein that consists of 2 heavy chain subunits (MHC), 2 alkali light chain subunits (MLC) and 2 regulatory light chain subunits (MLC-2). Interacts with GCSAM.

It is found in the cytoplasm. The protein localises to the myofibril. Functionally, myosins are actin-based motor molecules with ATPase activity essential for muscle contraction. The chain is Myosin-2 from Homo sapiens (Human).